The following is a 366-amino-acid chain: MNRVILYCRPGFEKECAAEITEKATQHDAYGFARVKENSGYVVFECYQHEDAERLVKTLPFHELIFARQMFVSGELLRDLPPEDRITPIVGMLSGAIERAGELRVEVPDTNESKELMKFCRKFTVPLRAALREHKILLGYEKADRPVLHVLFIAPGCCYVGYSYSNNNSPFYMGIPRLKFPSDAPSRSTLKLEEAFHVFIPADEWDERLGSGMYAVDLGACPGGWTYQLVKRSMMVYAVDNGPMAPSLMETGQVMHHQADGFRFEPPRNNVYWLVCDMVEKPAKVTSLMSDWLIKGWCREAIFNLKLPMKKRYEEVSHNLAVLQERLSENGINAEVHAKHLYHDREEITVHVRRFWSAVPGRRDER.

S-adenosyl-L-methionine contacts are provided by residues Ser188, 221–224 (CPGG), Asp240, Asp260, and Asp277. The active-site Proton acceptor is the Lys306.

The protein belongs to the class I-like SAM-binding methyltransferase superfamily. RNA methyltransferase RlmE family. RlmM subfamily. Monomer.

It localises to the cytoplasm. The catalysed reaction is cytidine(2498) in 23S rRNA + S-adenosyl-L-methionine = 2'-O-methylcytidine(2498) in 23S rRNA + S-adenosyl-L-homocysteine + H(+). Its function is as follows. Catalyzes the 2'-O-methylation at nucleotide C2498 in 23S rRNA. This Pectobacterium carotovorum subsp. carotovorum (strain PC1) protein is Ribosomal RNA large subunit methyltransferase M.